A 312-amino-acid polypeptide reads, in one-letter code: Bifunctional pinoresinol-lariciresinol reductase (312 aa).

NADP(+) contacts are provided by residues glycine 10 to glycine 16, arginine 35, and lysine 44. Catalysis depends on lysine 136, which acts as the Proton acceptor. Arginine 140 is a binding site for NADP(+). Histidine 268 is a binding site for substrate.

The protein belongs to the NmrA-type oxidoreductase family. Isoflavone reductase subfamily. Dimer. Expressed in seed coats, but not in embryos, leaves, stems and roots.

Reductase involved in lignan biosynthesis. Catalyzes the sequential conversion of pinoresinol into lariciresinol and of lariciresinol into secoisolariciresinol. Abstracts the 4R-hydride from the NADPH cofactor during catalysis. The polypeptide is Bifunctional pinoresinol-lariciresinol reductase (Linum usitatissimum (Flax)).